Here is a 148-residue protein sequence, read N- to C-terminus: MALAVLAWRTRTAVIALLSPPQAAALAVRYASKKTGGSSKNLGGKSPGKRFGIRKMEGHYVHAGNILATQRHFRWHPGAHVGLGKNKCLYALEEGVVRYTKEVYVPSPSNSEAVDLVTRLPEGAVLYKTFVHVVPAKPEGTFKLVAML.

A mitochondrion-targeting transit peptide spans 1–30; the sequence is MALAVLAWRTRTAVIALLSPPQAAALAVRY.

The protein belongs to the bacterial ribosomal protein bL27 family. Component of the mitochondrial ribosome large subunit (39S) which comprises a 16S rRNA and about 50 distinct proteins.

It localises to the mitochondrion. The chain is Large ribosomal subunit protein bL27m (MRPL27) from Bos taurus (Bovine).